The chain runs to 40 residues: Natriuretic peptide PaNP-b (40 aa).

Residues Cys9 and Cys25 are joined by a disulfide bond. A propeptide spanning residues 36-40 (IPGGS) is cleaved from the precursor.

This sequence belongs to the natriuretic peptide family. In terms of tissue distribution, expressed by the venom gland.

It localises to the secreted. In terms of biological role, snake venom natriuretic peptide that targets both NPR1 and NPR2. Exhibits hypotensive and vasodepressor activities. The sequence is that of Natriuretic peptide PaNP-b from Pseudechis australis (Mulga snake).